A 123-amino-acid chain; its full sequence is Large ribosomal subunit protein bL12 (123 aa).

The protein belongs to the bacterial ribosomal protein bL12 family. As to quaternary structure, homodimer. Part of the ribosomal stalk of the 50S ribosomal subunit. Forms a multimeric L10(L12)X complex, where L10 forms an elongated spine to which 2 to 4 L12 dimers bind in a sequential fashion. Binds GTP-bound translation factors.

In terms of biological role, forms part of the ribosomal stalk which helps the ribosome interact with GTP-bound translation factors. Is thus essential for accurate translation. This is Large ribosomal subunit protein bL12 from Neisseria meningitidis serogroup C (strain 053442).